The primary structure comprises 499 residues: Potassium voltage-gated channel subfamily A member 2 (499 aa).

A disordered region spans residues M1 to E26. The tetramerization domain stretch occupies residues M1 to M125. Residues M1–G160 lie on the Cytoplasmic side of the membrane. A helical transmembrane segment spans residues P161–L182. Residues E183–P221 lie on the Extracellular side of the membrane. N207 is a glycosylation site (N-linked (GlcNAc...) asparagine). The helical transmembrane segment at F222–A243 threads the bilayer. C244 is lipidated: S-palmitoyl cysteine. Residues C244–I254 are Cytoplasmic-facing. The chain crosses the membrane as a helical span at residues M255–A275. Residues E276–S289 lie on the Extracellular side of the membrane. The chain crosses the membrane as a helical; Voltage-sensor span at residues L290–H310. Residues S311–M325 are Cytoplasmic-facing. Residues K312 to M325 form an S4-S5 linker region. The helical transmembrane segment at R326 to Y347 threads the bilayer. Residues F348–I361 are Extracellular-facing. Positions P362–T373 form an intramembrane region, helical. The Selectivity filter signature appears at T374–D379. The stretch at T374 to V381 is an intramembrane region. Residues P382–K388 lie on the Extracellular side of the membrane. The chain crosses the membrane as a helical span at residues I389–Y417. At H418–V499 the chain is on the cytoplasmic side. Residue Y429 is modified to Phosphotyrosine. Phosphoserine occurs at positions 434, 440, 441, and 449. Y458 bears the Phosphotyrosine mark. Residue S468 is modified to Phosphoserine. The short motif at T497–V499 is the PDZ-binding element.

Belongs to the potassium channel family. A (Shaker) (TC 1.A.1.2) subfamily. Kv1.2/KCNA2 sub-subfamily. In terms of assembly, homotetramer and heterotetramer with other channel-forming alpha subunits, such as KCNA1, KCNA4, KCNA5, KCNA6 and KCNA7. Channel activity is regulated by interaction with beta subunits, including KCNAB1 and KCNAB2. Identified in a complex with KCNA1 and KCNAB2. Identified in a complex with KCNA5 and KCNAB1. Identified in a complex with KCNA4 and FYN. Interacts with PTK2B. Interacts (via C-terminus) with CTTN. Interacts with ADAM22. Interacts with CNTNAP2. Interacts (via C-terminus) with the PDZ domains of DLG1, DLG2 and DLG4. Interacts (via N-terminal cytoplasmic domain) with RHOA (GTP-bound form); this regulates channel activity by reducing location at the cell surface in response to CHRM1 activation. Interacts with DRD2. Interacts with SIGMAR1; cocaine consumption leads to increased interaction. Interacts with ADAM11. Interacts with LYNX1. In terms of processing, phosphorylated on tyrosine residues; phosphorylation increases in response to ischemia. Phosphorylated on tyrosine residues by activated PTK2B/PYK2. Phosphorylation on tyrosine residues suppresses ion channel activity. Phosphorylated on tyrosine residues in response to CHRM1 activation; this abolishes interaction with CTTN. This is probably due to endocytosis of the phosphorylated channel subunits. Phosphorylated on serine residues in response to increased cAMP levels; phosphorylation is apparently not catalyzed by PKA. Post-translationally, N-glycosylated, with complex, sialylated N-glycans. Detected in brain. Detected in cerebellum. Detected in mitral cells in the olfactory bulb. Detected in cochlea. Detected in cerebellum, particularly in the basket cell axon plexus and in the terminal regions around Purkinje cells (at protein level). Detected in juxtaparanodal regions in sciatic nerve. Detected in Schwann cells from sciatic nerve. Detected in dopamine neurons in substantia nigra. Detected in large myelinated fibers in juxtaparanodes in the CA3 and CA1 areas of the hippocampus. Detected in brain, in punctae on fiber tracts in brain stem and spinal cord, and on axons in the juxtaparanodal regions of the node of Ranvier (at protein level). Detected in dopamine neurons in the midbrain.

Its subcellular location is the cell membrane. It localises to the membrane. The protein localises to the cell projection. It is found in the axon. The protein resides in the synapse. Its subcellular location is the endoplasmic reticulum membrane. It localises to the lamellipodium membrane. The protein localises to the synaptosome. It is found in the presynaptic cell membrane. The protein resides in the dendrite. Its subcellular location is the perikaryon. It localises to the cell junction. The protein localises to the paranodal septate junction. The catalysed reaction is K(+)(in) = K(+)(out). Inhibited by 4-aminopyridine (4-AP), dendrotoxin (DTX) and charybdotoxin (CTX), but not by tetraethylammonium (TEA). Inhibited by tityustoxin-K alpha (TsTX-Kalpha), a toxin that is highly specific for KCNA2. Inhibited by maurotoxin. Inhibited by kappaM conotoxins kappaM-RIIIJ and kappaM-RIIIK. In terms of biological role, voltage-gated potassium channel that mediates transmembrane potassium transport in excitable membranes, primarily in the brain and the central nervous system, but also in the cardiovascular system. Prevents aberrant action potential firing and regulates neuronal output. Forms tetrameric potassium-selective channels through which potassium ions pass in accordance with their electrochemical gradient. The channel alternates between opened and closed conformations in response to the voltage difference across the membrane. Can form functional homotetrameric channels and heterotetrameric channels that contain variable proportions of KCNA1, KCNA2, KCNA4, KCNA5, KCNA6, KCNA7, and possibly other family members as well; channel properties depend on the type of alpha subunits that are part of the channel. Channel properties are modulated by cytoplasmic beta subunits that regulate the subcellular location of the alpha subunits and promote rapid inactivation of delayed rectifier potassium channels. In vivo, membranes probably contain a mixture of heteromeric potassium channel complexes, making it difficult to assign currents observed in intact tissues to any particular potassium channel family member. Homotetrameric KCNA2 forms a delayed-rectifier potassium channel that opens in response to membrane depolarization, followed by slow spontaneous channel closure. In contrast, a heteromultimer formed by KCNA2 and KCNA4 shows rapid inactivation. Contributes to the regulation of action potentials in neurons. KCNA2-containing channels play a presynaptic role and prevent hyperexcitability and aberrant action potential firing. Response to toxins that are selective for KCNA1, respectively for KCNA2, suggests that heteromeric potassium channels composed of both KCNA1 and KCNA2 play a role in pacemaking and regulate the output of deep cerebellar nuclear neurons. Response to toxins that are selective for KCNA2-containing potassium channels suggests that in Purkinje cells, dendritic subthreshold KCNA2-containing potassium channels prevent random spontaneous calcium spikes, suppressing dendritic hyperexcitability without hindering the generation of somatic action potentials, and thereby play an important role in motor coordination. KCNA2-containing channels play a role in GABAergic transmission from basket cells to Purkinje cells in the cerebellum, and thereby play an import role in motor coordination. Plays a role in the induction of long-term potentiation of neuron excitability in the CA3 layer of the hippocampus. May function as down-stream effector for G protein-coupled receptors and inhibit GABAergic inputs to basolateral amygdala neurons. May contribute to the regulation of neurotransmitter release, such as gamma-aminobutyric acid (GABA). Contributes to the regulation of the axonal release of the neurotransmitter dopamine. Reduced KCNA2 expression plays a role in the perception of neuropathic pain after peripheral nerve injury, but not acute pain. Plays a role in the regulation of the time spent in non-rapid eye movement (NREM) sleep. This Mus musculus (Mouse) protein is Potassium voltage-gated channel subfamily A member 2 (Kcna2).